The sequence spans 441 residues: Amino-acid acetyltransferase (441 aa).

Residues glutamate 295–serine 434 enclose the N-acetyltransferase domain.

It belongs to the acetyltransferase family. ArgA subfamily.

It is found in the cytoplasm. The catalysed reaction is L-glutamate + acetyl-CoA = N-acetyl-L-glutamate + CoA + H(+). It participates in amino-acid biosynthesis; L-arginine biosynthesis; N(2)-acetyl-L-ornithine from L-glutamate: step 1/4. The chain is Amino-acid acetyltransferase from Photobacterium profundum (strain SS9).